The primary structure comprises 548 residues: Eukaryotic translation initiation factor 3 subunit D (548 aa).

K53 carries the N6-acetyllysine modification. S161 bears the Phosphoserine mark. Positions 285-299 (DFDLLTVSETANEPP) are RNA gate. The tract at residues 523-548 (PDGTFSSDEDDEEEEEEEEEEEEEEA) is disordered. Phosphoserine is present on residues S528 and S529. Residues 529 to 548 (SDEDDEEEEEEEEEEEEEEA) are compositionally biased toward acidic residues.

The protein belongs to the eIF-3 subunit D family. Component of the eukaryotic translation initiation factor 3 (eIF-3) complex, which is composed of 13 subunits: EIF3A, EIF3B, EIF3C, EIF3D, EIF3E, EIF3F, EIF3G, EIF3H, EIF3I, EIF3J, EIF3K, EIF3L and EIF3M. The eIF-3 complex appears to include 3 stable modules: module A is composed of EIF3A, EIF3B, EIF3G and EIF3I; module B is composed of EIF3F, EIF3H, and EIF3M; and module C is composed of EIF3C, EIF3D, EIF3E, EIF3K and EIF3L. EIF3C of module C binds EIF3B of module A and EIF3H of module B, thereby linking the three modules. EIF3J is a labile subunit that binds to the eIF-3 complex via EIF3B. The eIF-3 complex interacts with RPS6KB1 under conditions of nutrient depletion. Mitogenic stimulation leads to binding and activation of a complex composed of MTOR and RPTOR, leading to phosphorylation and release of RPS6KB1 and binding of EIF4B to eIF-3.

It is found in the cytoplasm. In terms of biological role, mRNA cap-binding component of the eukaryotic translation initiation factor 3 (eIF-3) complex, a complex required for several steps in the initiation of protein synthesis of a specialized repertoire of mRNAs. The eIF-3 complex associates with the 40S ribosome and facilitates the recruitment of eIF-1, eIF-1A, eIF-2:GTP:methionyl-tRNAi and eIF-5 to form the 43S pre-initiation complex (43S PIC). The eIF-3 complex stimulates mRNA recruitment to the 43S PIC and scanning of the mRNA for AUG recognition. The eIF-3 complex is also required for disassembly and recycling of post-termination ribosomal complexes and subsequently prevents premature joining of the 40S and 60S ribosomal subunits prior to initiation. The eIF-3 complex specifically targets and initiates translation of a subset of mRNAs involved in cell proliferation, including cell cycling, differentiation and apoptosis, and uses different modes of RNA stem-loop binding to exert either translational activation or repression. In the eIF-3 complex, EIF3D specifically recognizes and binds the 7-methylguanosine cap of a subset of mRNAs. This chain is Eukaryotic translation initiation factor 3 subunit D, found in Bos taurus (Bovine).